Here is a 149-residue protein sequence, read N- to C-terminus: Glutamate mutase sigma subunit (149 aa).

Residues 3–140 (KATLVIGVIG…AHDINQRHDV (138 aa)) enclose the B12-binding domain. Residues 13–17 (ADCHA), His16, 61–63 (SSI), and 93–97 (NLVVG) contribute to the adenosylcob(III)alamin site.

Belongs to the methylaspartate mutase GlmS subunit family. Heterotetramer composed of 2 epsilon subunits (GlmE) and 2 sigma subunits (GlmS). GlmE exists as a homodimer and GlmS as a monomer. The cofactor is adenosylcob(III)alamin.

The catalysed reaction is (2S,3S)-3-methyl-L-aspartate = L-glutamate. It functions in the pathway amino-acid degradation; L-glutamate degradation via mesaconate pathway; acetate and pyruvate from L-glutamate: step 1/4. Its function is as follows. Catalyzes the carbon skeleton rearrangement of L-glutamate to L-threo-3-methylaspartate ((2S,3S)-3-methylaspartate). The sequence is that of Glutamate mutase sigma subunit from Escherichia coli O157:H7.